The chain runs to 453 residues: uncharacterized protein (453 aa).

A TRAM domain is found at 5-63; that stretch reads LLKKNQSIELTIEDLTHDGSGVGKIDGYPFFIPNTLPGEKVTAKIIKLNKNYGFARMEN. Cysteine 76, cysteine 82, cysteine 85, and cysteine 162 together coordinate [4Fe-4S] cluster. Glutamine 285, tyrosine 314, glutamate 335, and aspartate 383 together coordinate S-adenosyl-L-methionine. The active-site Nucleophile is the cysteine 410.

Belongs to the class I-like SAM-binding methyltransferase superfamily. RNA M5U methyltransferase family.

This is an uncharacterized protein from Listeria monocytogenes serovar 1/2a (strain ATCC BAA-679 / EGD-e).